A 207-amino-acid chain; its full sequence is Urease accessory protein UreG (207 aa).

14–21 (GPVGSGKT) contributes to the GTP binding site.

The protein belongs to the SIMIBI class G3E GTPase family. UreG subfamily. In terms of assembly, homodimer. UreD, UreF and UreG form a complex that acts as a GTP-hydrolysis-dependent molecular chaperone, activating the urease apoprotein by helping to assemble the nickel containing metallocenter of UreC. The UreE protein probably delivers the nickel.

The protein resides in the cytoplasm. Functionally, facilitates the functional incorporation of the urease nickel metallocenter. This process requires GTP hydrolysis, probably effectuated by UreG. The polypeptide is Urease accessory protein UreG (Rhodopseudomonas palustris (strain BisB18)).